A 338-amino-acid polypeptide reads, in one-letter code: Flap endonuclease 1 (338 aa).

Residues 1-98 are N-domain; it reads MGVNLSSILI…ETLRERSLIK (98 aa). Mg(2+) is bound by residues D27, D80, E152, E154, D173, D175, and D236. Positions 116–257 are I-domain; sequence KIRSLSSRIN…TALSLIKKYN (142 aa). The segment at 330–338 is interaction with PCNA; that stretch reads HQSSLDRFF.

Belongs to the XPG/RAD2 endonuclease family. FEN1 subfamily. As to quaternary structure, interacts with PCNA. PCNA stimulates the nuclease activity without altering cleavage specificity. It depends on Mg(2+) as a cofactor.

In terms of biological role, structure-specific nuclease with 5'-flap endonuclease and 5'-3' exonuclease activities involved in DNA replication and repair. During DNA replication, cleaves the 5'-overhanging flap structure that is generated by displacement synthesis when DNA polymerase encounters the 5'-end of a downstream Okazaki fragment. Binds the unpaired 3'-DNA end and kinks the DNA to facilitate 5' cleavage specificity. Cleaves one nucleotide into the double-stranded DNA from the junction in flap DNA, leaving a nick for ligation. Also involved in the base excision repair (BER) pathway. Acts as a genome stabilization factor that prevents flaps from equilibrating into structures that lead to duplications and deletions. Also possesses 5'-3' exonuclease activity on nicked or gapped double-stranded DNA. The polypeptide is Flap endonuclease 1 (Picrophilus torridus (strain ATCC 700027 / DSM 9790 / JCM 10055 / NBRC 100828 / KAW 2/3)).